The following is a 114-amino-acid chain: Tyrosine-protein phosphatase 27 (114 aa).

Residues 1-114 (WQMIVEHKCC…ELGNDNPIVV (114 aa)) form the Tyrosine-protein phosphatase domain. A substrate-binding site is contributed by aspartate 82.

It belongs to the protein-tyrosine phosphatase family.

It carries out the reaction O-phospho-L-tyrosyl-[protein] + H2O = L-tyrosyl-[protein] + phosphate. The polypeptide is Tyrosine-protein phosphatase 27 (STY-27) (Styela plicata (Wrinkled sea squirt)).